Consider the following 208-residue polypeptide: Protein GrpE (208 aa).

Residues 1–12 (MTNKDESVEKNT) are compositionally biased toward basic and acidic residues. Residues 1 to 51 (MTNKDESVEKNTESTVEETNVKQNIDDSVEQAEESKGHLQDEAIEETSDEN) form a disordered region. A compositionally biased stretch (polar residues) spans 13-23 (ESTVEETNVKQ). A compositionally biased stretch (acidic residues) spans 42-51 (EAIEETSDEN).

Belongs to the GrpE family. In terms of assembly, homodimer.

The protein resides in the cytoplasm. Functionally, participates actively in the response to hyperosmotic and heat shock by preventing the aggregation of stress-denatured proteins, in association with DnaK and GrpE. It is the nucleotide exchange factor for DnaK and may function as a thermosensor. Unfolded proteins bind initially to DnaJ; upon interaction with the DnaJ-bound protein, DnaK hydrolyzes its bound ATP, resulting in the formation of a stable complex. GrpE releases ADP from DnaK; ATP binding to DnaK triggers the release of the substrate protein, thus completing the reaction cycle. Several rounds of ATP-dependent interactions between DnaJ, DnaK and GrpE are required for fully efficient folding. The chain is Protein GrpE from Staphylococcus aureus (strain USA300).